Reading from the N-terminus, the 198-residue chain is Ras-like protein 2 (198 aa).

Position 18–25 (18–25 (GDGGVGKS)) interacts with GTP. The Effector region motif lies at 40–48 (YDPTIEDSY). Residues 65 to 69 (DTAGQ) and 124 to 127 (NKCD) each bind GTP. Cys-195 is modified (cysteine methyl ester). Cys-195 carries S-farnesyl cysteine lipidation. Positions 196-198 (IVM) are cleaved as a propeptide — removed in mature form.

Belongs to the small GTPase superfamily. Ras family.

The protein resides in the cell membrane. The catalysed reaction is GTP + H2O = GDP + phosphate + H(+). Alternates between an inactive form bound to GDP and an active form bound to GTP. Activated by a guanine nucleotide-exchange factor (GEF) and inactivated by a GTPase-activating protein (GAP). The polypeptide is Ras-like protein 2 (RAS2) (Mucor circinelloides f. lusitanicus (Mucor racemosus var. lusitanicus)).